The chain runs to 194 residues: uncharacterized protein (194 aa).

This is an uncharacterized protein from Ostreid herpesvirus 1 (isolate France) (OsHV-1).